Reading from the N-terminus, the 337-residue chain is S-adenosylmethionine:tRNA ribosyltransferase-isomerase (337 aa).

This sequence belongs to the QueA family. In terms of assembly, monomer.

It is found in the cytoplasm. The enzyme catalyses 7-aminomethyl-7-carbaguanosine(34) in tRNA + S-adenosyl-L-methionine = epoxyqueuosine(34) in tRNA + adenine + L-methionine + 2 H(+). It functions in the pathway tRNA modification; tRNA-queuosine biosynthesis. Its function is as follows. Transfers and isomerizes the ribose moiety from AdoMet to the 7-aminomethyl group of 7-deazaguanine (preQ1-tRNA) to give epoxyqueuosine (oQ-tRNA). This chain is S-adenosylmethionine:tRNA ribosyltransferase-isomerase, found in Legionella pneumophila (strain Corby).